We begin with the raw amino-acid sequence, 120 residues long: Cell division topological specificity factor (120 aa).

The tract at residues 93–120 (LNSCEGENPQQDPGAAPSEGGHLSSPSP) is disordered.

Belongs to the MinE family.

Functionally, prevents the cell division inhibition by proteins MinC and MinD at internal division sites while permitting inhibition at polar sites. This ensures cell division at the proper site by restricting the formation of a division septum at the midpoint of the long axis of the cell. This Synechococcus sp. (strain JA-3-3Ab) (Cyanobacteria bacterium Yellowstone A-Prime) protein is Cell division topological specificity factor.